The sequence spans 314 residues: Acetaldehyde dehydrogenase 1/2 (314 aa).

12-15 contributes to the NAD(+) binding site; the sequence is SGNI. Cys130 serves as the catalytic Acyl-thioester intermediate. NAD(+)-binding positions include 161–169 and Asn288; that span reads SAGPGTRAN.

The protein belongs to the acetaldehyde dehydrogenase family.

It catalyses the reaction acetaldehyde + NAD(+) + CoA = acetyl-CoA + NADH + H(+). The sequence is that of Acetaldehyde dehydrogenase 1/2 from Rhizorhabdus wittichii (strain DSM 6014 / CCUG 31198 / JCM 15750 / NBRC 105917 / EY 4224 / RW1) (Sphingomonas wittichii).